Consider the following 524-residue polypeptide: Protein-export membrane protein SecD (524 aa).

The next 6 helical transmembrane spans lie at 10–30 (VIFLVAAILLSTFALFSPTMG), 366–386 (KFDSLITGIVAVLAVAGVVFI), 389–409 (GKPQVALPMIVTGLSEVYILL), 420–442 (DLSVIAGFIAVIGTGVDDLIIIA), 465–485 (FWVIGAAAATTIIAMSPLAVL), and 487–507 (LGDLQGFAIFTILGVIVGVLV).

It belongs to the SecD/SecF family. SecD subfamily. As to quaternary structure, part of the protein translocation apparatus. Forms a homodimer and complexes with SecF.

The protein resides in the cell membrane. Involved in protein export. The chain is Protein-export membrane protein SecD from Haloferax volcanii (strain ATCC 29605 / DSM 3757 / JCM 8879 / NBRC 14742 / NCIMB 2012 / VKM B-1768 / DS2) (Halobacterium volcanii).